A 557-amino-acid chain; its full sequence is MFS-type transporter clz4 (557 aa).

Transmembrane regions (helical) follow at residues 22-42 (LIIV…DHNG), 59-79 (SITW…VLYG), 89-109 (ALFV…GFAT), 120-140 (LTGA…TDVV), 150-170 (AVVA…AAGV), 179-199 (GLFW…GYIL), 217-237 (WLGS…VSGP), 245-265 (SLLV…FLFI), 269-289 (LATL…SALL), 319-339 (VISG…SMIA), 346-366 (SGQY…GSLL), 379-399 (VIIV…PMVI), 419-439 (FFRF…LQST), and 479-499 (HVYI…FVWK). The span at 505–523 (SRPTENNDDIEHAPARGIE) shows a compositional bias: basic and acidic residues. The tract at residues 505–557 (SRPTENNDDIEHAPARGIEREDEQSSLIYDREPSAVSYGTVEAGEPNRLRRGG) is disordered.

It belongs to the major facilitator superfamily. TCR/Tet family.

It localises to the membrane. Functionally, MFS-type transporter; part of the gene cluster that mediates the biosynthesis of squalestatin S1 (SQS1, also known as zaragozic acid A), a heavily oxidized fungal polyketide that offers potent cholesterol lowering activity by targeting squalene synthase (SS). This Cochliobolus lunatus (Filamentous fungus) protein is MFS-type transporter clz4.